We begin with the raw amino-acid sequence, 450 residues long: UDP-N-acetylmuramoylalanine--D-glutamate ligase (450 aa).

ATP is bound at residue 119–125 (GSNGKTT).

This sequence belongs to the MurCDEF family.

It is found in the cytoplasm. The catalysed reaction is UDP-N-acetyl-alpha-D-muramoyl-L-alanine + D-glutamate + ATP = UDP-N-acetyl-alpha-D-muramoyl-L-alanyl-D-glutamate + ADP + phosphate + H(+). It functions in the pathway cell wall biogenesis; peptidoglycan biosynthesis. Cell wall formation. Catalyzes the addition of glutamate to the nucleotide precursor UDP-N-acetylmuramoyl-L-alanine (UMA). In Streptococcus pneumoniae serotype 19F (strain G54), this protein is UDP-N-acetylmuramoylalanine--D-glutamate ligase.